A 148-amino-acid polypeptide reads, in one-letter code: Putative pre-16S rRNA nuclease (148 aa).

It belongs to the YqgF nuclease family.

It localises to the cytoplasm. Could be a nuclease involved in processing of the 5'-end of pre-16S rRNA. The sequence is that of Putative pre-16S rRNA nuclease from Chromohalobacter salexigens (strain ATCC BAA-138 / DSM 3043 / CIP 106854 / NCIMB 13768 / 1H11).